The sequence spans 377 residues: Short chain dehydrogenase gsfE (377 aa).

Residues D89, Q121, Y226, A266, and S268 each coordinate NADP(+). Residue Y226 is the Proton donor of the active site.

The protein belongs to the short-chain dehydrogenases/reductases (SDR) family. Highly divergent.

It carries out the reaction dehydrogriseofulvin + NADPH + H(+) = griseofulvin + NADP(+). It participates in secondary metabolite biosynthesis; terpenoid biosynthesis. Functionally, short chain dehydrogenase; part of the gene cluster that mediates the biosynthesis of griseofulvin, an important antifungal drug that has been in use for a long time for treating dermatophyte infections. The first step of the pathway is the formation of the heptaketide backbone by gsfA which is initiated by priming with acetyl-CoA, followed by sequential condensations of 6 malonyl-CoA units. The resulting benzophenone can undergo a spontaneous dehydration to form norlichexanthone. However, the true precursor for the griseofulvin biosynthesis is not norlichexanthone, but the heptaketide benzophenone that is O-methylated at 3-OH by gsfB to produce griseophenone D which is further methylated at 9-OH by gsfC to yield griseophenone C. Griseophenone C is then substrate of halogenase gsfI which is responsible for the regio-specific chlorination at the C13 position to form griseophenone B. The cytochrome P450 gsfF catalyzes the coupling of orcinol and phloroglucinol rings in griseophenone B to form desmethyl-dehydrogriseofulvin A which is further methylated at 5-OH by gsfD to yield dehydrogriseofulvin. Finally, gsfE performs stereospecific reduction of enone 18 of dehydrogriseofulvin to afford the final product griseofulvin. The polypeptide is Short chain dehydrogenase gsfE (Penicillium aethiopicum).